A 406-amino-acid chain; its full sequence is Mitochondrial intermembrane space import and assembly protein 40 (406 aa).

A mitochondrion-targeting transit peptide spans 1–23; the sequence is MFRVSLQATRRVAFRSARQIRFY. The Mitochondrial matrix segment spans residues 24–37; sequence SAHPPSGGVSHMNK. Residues 38-54 traverse the membrane as a helical; Signal-anchor for type II membrane protein segment; the sequence is PALLLAGFSTLGAIYVA. Residues 55 to 406 lie on the Mitochondrial intermembrane side of the membrane; that stretch reads DGCPTLIERK…AVTNTDDEKK (352 aa). 2 disordered regions span residues 67-110 and 142-276; these read PAEK…TTPE and VNEQ…PETG. Residues 205 to 224 are compositionally biased toward basic and acidic residues; sequence ASKDGSEGESDVVLHEKSPA. The span at 242–260 shows a compositional bias: low complexity; sequence SGGTAEQSATAAAAAAGVQ. Intrachain disulfides connect Cys-282–Cys-284, Cys-293–Cys-326, and Cys-303–Cys-316. The region spanning 290–334 is the CHCH domain; it reads YGPCGEEFKSAFSCFVYSEADPKGINCVEKFSTMQNCFRKYPDYY. 2 short sequence motifs (cx9C motif) span residues 293–303 and 316–326; these read CGEEFKSAFSC and CVEKFSTMQNC. Disordered stretches follow at residues 341 to 365 and 384 to 406; these read EEEA…ATST and EENP…DEKK. The span at 356–365 shows a compositional bias: low complexity; that stretch reads TTPVSTATST. The span at 384 to 393 shows a compositional bias: basic and acidic residues; the sequence is EENPQLKDTP.

Monomer. It depends on Cu(2+) as a cofactor. Zn(2+) serves as cofactor.

Its subcellular location is the mitochondrion inner membrane. Its function is as follows. Required for the import and folding of small cysteine-containing proteins (small Tim) in the mitochondrial intermembrane space (IMS). Forms a redox cycle with ERV1 that involves a disulfide relay system. Precursor proteins to be imported into the IMS are translocated in their reduced form into the mitochondria. The oxidized form of MIA40 forms a transient intermolecular disulfide bridge with the reduced precursor protein, resulting in oxidation of the precursor protein that now contains an intramolecular disulfide bond and is able to undergo folding in the IMS. This chain is Mitochondrial intermembrane space import and assembly protein 40 (MIA40), found in Kluyveromyces lactis (strain ATCC 8585 / CBS 2359 / DSM 70799 / NBRC 1267 / NRRL Y-1140 / WM37) (Yeast).